Reading from the N-terminus, the 726-residue chain is WD repeat and coiled-coil-containing protein (726 aa).

2 WD repeats span residues 55 to 98 (GQFE…LDKN) and 154 to 194 (KSSG…LNAC). Residues 503–571 (SYDGDQSPTS…SSPPNFIKHG (69 aa)) form a disordered region. The span at 506–515 (GDQSPTSSAN) shows a compositional bias: polar residues. The span at 517-535 (FDDKRSKLRVESLDTEPKN) shows a compositional bias: basic and acidic residues. The span at 550–565 (SRPTSPKSECQKSSPP) shows a compositional bias: polar residues. Residues 581 to 609 (SISRNVERLCCNFAHLQQHLSELTDITRN) are a coiled coil.

In Xenopus tropicalis (Western clawed frog), this protein is WD repeat and coiled-coil-containing protein (wdcp).